The following is a 194-amino-acid chain: tRNA (guanosine(18)-2'-O)-methyltransferase (194 aa).

Residues T99, 122-126 (GAEKW), I142, and L151 contribute to the S-adenosyl-L-methionine site.

This sequence belongs to the class IV-like SAM-binding methyltransferase superfamily. RNA methyltransferase TrmH family. In terms of assembly, monomer.

The catalysed reaction is guanosine(18) in tRNA + S-adenosyl-L-methionine = 2'-O-methylguanosine(18) in tRNA + S-adenosyl-L-homocysteine + H(+). Its activity is regulated as follows. Stimulated by magnesium ions and spermine. Inhibited by S-adenosyl-homocysteine. Catalyzes the 2'-O methylation of guanosine at position 18 in tRNA. The sequence is that of tRNA (guanosine(18)-2'-O)-methyltransferase from Thermus thermophilus (strain ATCC BAA-163 / DSM 7039 / HB27).